The primary structure comprises 103 residues: Thioredoxin (103 aa).

One can recognise a Thioredoxin domain in the interval 1–103 (MVKEITDATF…ELDEVINKYV (103 aa)). The cysteines at positions 28 and 31 are disulfide-linked.

This sequence belongs to the thioredoxin family.

Component of the thioredoxin-thioredoxin reductase system. Participates in various redox reactions through the reversible oxidation of its active center dithiol to a disulfide and catalyzes dithiol-disulfide exchange reactions. This is Thioredoxin (trxA) from Listeria innocua serovar 6a (strain ATCC BAA-680 / CLIP 11262).